The sequence spans 356 residues: Protein MGF 360-3L (356 aa).

The stretch at 61–93 (KLNTALVLAVKENNDDLIMLFTEWGANINYGLL) is one ANK repeat.

This sequence belongs to the asfivirus MGF 360 family.

Its function is as follows. Plays a role in virus cell tropism, and may be required for efficient virus replication in macrophages. The polypeptide is Protein MGF 360-3L (Ornithodoros (relapsing fever ticks)).